Reading from the N-terminus, the 923-residue chain is Meiotic recombination protein rec11 (923 aa).

Residues 278 to 365 form the SCD domain; that stretch reads LFSRIHDIRA…DRFSLRIVEI (88 aa).

The protein is Meiotic recombination protein rec11 (rec11) of Schizosaccharomyces pombe (strain 972 / ATCC 24843) (Fission yeast).